The sequence spans 250 residues: tRNA (guanine-N(1)-)-methyltransferase (250 aa).

Residues Gly112 and 132–137 (IGDFVL) each bind S-adenosyl-L-methionine.

It belongs to the RNA methyltransferase TrmD family. In terms of assembly, homodimer.

It is found in the cytoplasm. It catalyses the reaction guanosine(37) in tRNA + S-adenosyl-L-methionine = N(1)-methylguanosine(37) in tRNA + S-adenosyl-L-homocysteine + H(+). Its function is as follows. Specifically methylates guanosine-37 in various tRNAs. This is tRNA (guanine-N(1)-)-methyltransferase from Marinomonas sp. (strain MWYL1).